Reading from the N-terminus, the 261-residue chain is 1,6-dihydroxycyclohexa-2,4-diene-1-carboxylate dehydrogenase (261 aa).

13-37 (IVTGAAQGIGRGVALRIAQEGGCLI) lines the NAD(+) pocket. Ser145 contributes to the substrate binding site. Tyr156 acts as the Proton acceptor in catalysis.

The protein belongs to the short-chain dehydrogenases/reductases (SDR) family. As to quaternary structure, homodimer.

The catalysed reaction is (1R,6S)-1,6-dihydroxycyclohexa-2,4-diene-1-carboxylate + NAD(+) = catechol + CO2 + NADH. Its pathway is aromatic compound metabolism; benzoate degradation via hydroxylation; catechol from benzoate: step 2/2. Functionally, degradation of 2-hydro-1,2-dihydroxy benzoate (DHB) to catechol. This Acinetobacter baylyi (strain ATCC 33305 / BD413 / ADP1) protein is 1,6-dihydroxycyclohexa-2,4-diene-1-carboxylate dehydrogenase (benD).